Consider the following 295-residue polypeptide: Keratin-like protein KRT222 (295 aa).

An IF rod domain is found at 1-150; it reads MELSQLLNEI…HLLEKEEIRY (150 aa). The stretch at 2 to 150 forms a coiled coil; the sequence is ELSQLLNEIR…HLLEKEEIRY (149 aa).

It belongs to the intermediate filament family.

This chain is Keratin-like protein KRT222 (KRT222), found in Homo sapiens (Human).